Reading from the N-terminus, the 109-residue chain is Phosphoribosyl-ATP pyrophosphatase (109 aa).

This sequence belongs to the PRA-PH family.

The protein resides in the cytoplasm. It carries out the reaction 1-(5-phospho-beta-D-ribosyl)-ATP + H2O = 1-(5-phospho-beta-D-ribosyl)-5'-AMP + diphosphate + H(+). It functions in the pathway amino-acid biosynthesis; L-histidine biosynthesis; L-histidine from 5-phospho-alpha-D-ribose 1-diphosphate: step 2/9. The sequence is that of Phosphoribosyl-ATP pyrophosphatase from Parvibaculum lavamentivorans (strain DS-1 / DSM 13023 / NCIMB 13966).